Consider the following 178-residue polypeptide: Large ribosomal subunit protein eL20w (178 aa).

The protein belongs to the eukaryotic ribosomal protein eL20 family.

This is Large ribosomal subunit protein eL20w (RPL18AD) from Arabidopsis thaliana (Mouse-ear cress).